The primary structure comprises 469 residues: UDP-N-acetylmuramate--L-alanine ligase (469 aa).

122–128 contributes to the ATP binding site; the sequence is GTHGKTT.

The protein belongs to the MurCDEF family.

It is found in the cytoplasm. The enzyme catalyses UDP-N-acetyl-alpha-D-muramate + L-alanine + ATP = UDP-N-acetyl-alpha-D-muramoyl-L-alanine + ADP + phosphate + H(+). The protein operates within cell wall biogenesis; peptidoglycan biosynthesis. Functionally, cell wall formation. This Legionella pneumophila subsp. pneumophila (strain Philadelphia 1 / ATCC 33152 / DSM 7513) protein is UDP-N-acetylmuramate--L-alanine ligase.